Here is a 1138-residue protein sequence, read N- to C-terminus: Protein RECOGNITION OF PERONOSPORA PARASITICA 7 (1138 aa).

In terms of domain architecture, NB-ARC spans 166–422 (EENVKKLVGY…CNYVLSLSFE (257 aa)). 189–196 (GMGGLGKT) provides a ligand contact to ATP. LRR repeat units follow at residues 544–565 (QYPT…SLVV), 566–581 (VTLG…FTRL), 582–606 (ELLR…IGKL), 607–631 (IHLR…NLKL), 655–680 (MQEL…NLVK), 681–705 (LETL…RLRT), 707–726 (TIEL…IGGL), 727–752 (KYLE…VFDF), 754–774 (HLKR…QHFP), 775–797 (SHLT…ILEK), 798–825 (LLQL…GFPQ), 847–871 (MPLL…HLPS), 873–893 (LTAI…LERL), 894–918 (VHLK…GFPQ), 940–963 (MPRL…GFPQ), 1028–1050 (LEKL…RMVC), 1055–1078 (FPQL…QGSM), 1079–1103 (PLLH…RFIY), and 1115–1138 (KKRL…EFDD).

This sequence belongs to the disease resistance NB-LRR family.

Disease resistance protein required for incompatible interactions with avirulent strains of Hyaloperonospora arabidopsidis (downy mildew), isolate Hpa-Hiks1 in cv. Columbia. The chain is Protein RECOGNITION OF PERONOSPORA PARASITICA 7 from Arabidopsis thaliana (Mouse-ear cress).